We begin with the raw amino-acid sequence, 602 residues long: MPVERDRIRNFCIIAHIDHGKSTLADRLLEYTGALVGRRMQEQVLDQMDLERERGITIKLQAVRLAYRARDGRDYQLNLIDTPGHVDFSYEVSRSLAACEGALLVVDASQGIEAQTLANVNLALDHNLTIIPIINKIDLASAEPDRVRRELEDVIGLDGADAVLASAKRGDGVEEILERIVRDVPPPGGDPGAPLRALIFDSHYDPYRGVVTYLRLMDGRLFPGGPVRMMATGREFEVSELGVFTPAPVTVNELRAGEVGFMAAGIKNVKDCRVGDTVTDARRPASSPLPGYRKAKPMVYCGLFPVDGAEFEKVRDALDRLSLNDASLVYEPETSTALGFGFRCGFLGLLHMEIIQERLEREYGLDLITTAPSVVYRVTRTNGAVLDIRNPSEMPPAGEIEKMEEPFVLTSLLLPQDYIGPVMELCQDRRGVFRNMEYISTHRVLITYEMPLAEIIYDFFDRLKSATRGYASMDYDLLGYRESKLVRVDILVAGERLDALSIIVHRDRAYHRSKIIVERLRDLIPRQLFEIVIQAAIGQRVIARESIRALRKAVLEKCYGGDVTRKRKLLEKQKEGKKRMKQVGHVQIPQEAFMSVLSIGQK.

The region spanning 6 to 188 is the tr-type G domain; the sequence is DRIRNFCIIA…RIVRDVPPPG (183 aa). GTP-binding positions include 18 to 23 and 135 to 138; these read DHGKST and NKID.

This sequence belongs to the TRAFAC class translation factor GTPase superfamily. Classic translation factor GTPase family. LepA subfamily.

It localises to the cell membrane. It carries out the reaction GTP + H2O = GDP + phosphate + H(+). Required for accurate and efficient protein synthesis under certain stress conditions. May act as a fidelity factor of the translation reaction, by catalyzing a one-codon backward translocation of tRNAs on improperly translocated ribosomes. Back-translocation proceeds from a post-translocation (POST) complex to a pre-translocation (PRE) complex, thus giving elongation factor G a second chance to translocate the tRNAs correctly. Binds to ribosomes in a GTP-dependent manner. The chain is Elongation factor 4 from Desulforudis audaxviator (strain MP104C).